A 1043-amino-acid polypeptide reads, in one-letter code: F-box DNA helicase 1 (1043 aa).

Residues 30-56 (QRWTNRDPNHGLYPKPRTKRGSRGQGS) are disordered. The PIP-box signature appears at 57 to 64 (QRCIPEFF). The disordered stretch occupies residues 101 to 191 (CALPQEGSAG…QDAGDVGPDP (91 aa)). Ser-124 carries the phosphoserine modification. Residues 138–184 (SRWDGVSKKAPRHHLSVPCTRPREARQEAEDSTSRLSAESGETDQDA) enclose the F-box domain. A compositionally biased stretch (basic and acidic residues) spans 158-170 (RPREARQEAEDST). The UvrD-like helicase ATP-binding domain occupies 442–705 (THEQQLILNH…FYLTQSFRFG (264 aa)). Residue 463-470 (AFAGTGKT) coordinates ATP. The APIM motif signature appears at 807–811 (KFIRR).

It belongs to the helicase family. UvrD subfamily. As to quaternary structure, part of the SCF (SKP1-CUL1-F-box) E3 ubiquitin-protein ligase complex SCF(FBH1) composed of CUL1, SKP1, RBX1 and FBH1. Interacts with RAD51. Interacts with RPA2. Interacts (via PIP-box and RanBP2-type zinc finger) with PCNA. Post-translationally, ubiquitinated. Ubiquitination by the DCX(DTL) complex, also named CRL4(CDT2), leading to its degradation: ubiquitination takes place after its localization to DNA damage sites, possibly to facilitate the translesion synthesis (TLS) pathway.

The protein resides in the nucleus. It localises to the chromosome. The enzyme catalyses Couples ATP hydrolysis with the unwinding of duplex DNA by translocating in the 3'-5' direction.. It carries out the reaction ATP + H2O = ADP + phosphate + H(+). Its pathway is protein modification; protein ubiquitination. Its function is as follows. 3'-5' DNA helicase and substrate-recognition component of the SCF(FBH1) E3 ubiquitin ligase complex that plays a key role in response to stalled/damaged replication forks. Involved in genome maintenance by acting as an anti-recombinogenic helicase and preventing extensive strand exchange during homologous recombination: promotes RAD51 filament dissolution from stalled forks, thereby inhibiting homologous recombination and preventing excessive recombination. Also promotes cell death and DNA double-strand breakage in response to replication stress: together with MUS81, promotes the endonucleolytic DNA cleavage following prolonged replication stress via its helicase activity, possibly to eliminate cells with excessive replication stress. Plays a major role in remodeling of stalled DNA forks by catalyzing fork regression, in which the fork reverses and the two nascent DNA strands anneal. In addition to the helicase activity, also acts as the substrate-recognition component of the SCF(FBH1) E3 ubiquitin ligase complex, a complex that mediates ubiquitination of RAD51, leading to regulate RAD51 subcellular location. The protein is F-box DNA helicase 1 of Homo sapiens (Human).